The chain runs to 344 residues: Photosystem II protein D1 (344 aa).

3 helical membrane-spanning segments follow: residues 29–46 (YIGWFGVLMVPTLLTATT), 118–133 (HFFIGVCSYMGREWEL), and 142–156 (WIAVAYSAPVAAATA). His118 lines the chlorophyll a pocket. Tyr126 serves as a coordination point for pheophytin a. [CaMn4O5] cluster-binding residues include Asp170 and Glu189. The helical transmembrane segment at 197–218 (FHMLGVAGVFGGSLFSAMHGSL) threads the bilayer. His198 is a chlorophyll a binding site. A quinone contacts are provided by residues His215 and 264-265 (SF). His215 lines the Fe cation pocket. His272 lines the Fe cation pocket. A helical membrane pass occupies residues 274 to 288 (FLAAWPVIGIWFTAM). The [CaMn4O5] cluster site is built by His332, Glu333, Asp342, and Ala344.

It belongs to the reaction center PufL/M/PsbA/D family. In terms of assembly, PSII is composed of 1 copy each of membrane proteins PsbA, PsbB, PsbC, PsbD, PsbE, PsbF, PsbH, PsbI, PsbJ, PsbK, PsbL, PsbM, PsbT, PsbY, PsbZ, Psb30/Ycf12, at least 3 peripheral proteins of the oxygen-evolving complex and a large number of cofactors. It forms dimeric complexes. Requires The D1/D2 heterodimer binds P680, chlorophylls that are the primary electron donor of PSII, and subsequent electron acceptors. It shares a non-heme iron and each subunit binds pheophytin, quinone, additional chlorophylls, carotenoids and lipids. D1 provides most of the ligands for the Mn4-Ca-O5 cluster of the oxygen-evolving complex (OEC). There is also a Cl(-1) ion associated with D1 and D2, which is required for oxygen evolution. The PSII complex binds additional chlorophylls, carotenoids and specific lipids. as cofactor. Tyr-161 forms a radical intermediate that is referred to as redox-active TyrZ, YZ or Y-Z.

The protein resides in the plastid. The protein localises to the chloroplast thylakoid membrane. The enzyme catalyses 2 a plastoquinone + 4 hnu + 2 H2O = 2 a plastoquinol + O2. Photosystem II (PSII) is a light-driven water:plastoquinone oxidoreductase that uses light energy to abstract electrons from H(2)O, generating O(2) and a proton gradient subsequently used for ATP formation. It consists of a core antenna complex that captures photons, and an electron transfer chain that converts photonic excitation into a charge separation. The D1/D2 (PsbA/PsbD) reaction center heterodimer binds P680, the primary electron donor of PSII as well as several subsequent electron acceptors. The sequence is that of Photosystem II protein D1 from Bigelowiella natans (Pedinomonas minutissima).